The following is a 376-amino-acid chain: Lipoyl synthase 1, mitochondrial (376 aa).

7 residues coordinate [4Fe-4S] cluster: C109, C114, C120, C140, C144, C147, and S356. One can recognise a Radical SAM core domain in the interval E125–R345.

This sequence belongs to the radical SAM superfamily. Lipoyl synthase family. [4Fe-4S] cluster is required as a cofactor.

It is found in the mitochondrion. It carries out the reaction [[Fe-S] cluster scaffold protein carrying a second [4Fe-4S](2+) cluster] + N(6)-octanoyl-L-lysyl-[protein] + 2 oxidized [2Fe-2S]-[ferredoxin] + 2 S-adenosyl-L-methionine + 4 H(+) = [[Fe-S] cluster scaffold protein] + N(6)-[(R)-dihydrolipoyl]-L-lysyl-[protein] + 4 Fe(3+) + 2 hydrogen sulfide + 2 5'-deoxyadenosine + 2 L-methionine + 2 reduced [2Fe-2S]-[ferredoxin]. The protein operates within protein modification; protein lipoylation via endogenous pathway; protein N(6)-(lipoyl)lysine from octanoyl-[acyl-carrier-protein]: step 2/2. Its function is as follows. Catalyzes the radical-mediated insertion of two sulfur atoms into the C-6 and C-8 positions of the octanoyl moiety bound to the lipoyl domains of lipoate-dependent enzymes, thereby converting the octanoylated domains into lipoylated derivatives. This chain is Lipoyl synthase 1, mitochondrial, found in Pisum sativum (Garden pea).